A 121-amino-acid chain; its full sequence is Large ribosomal subunit protein uL22 (121 aa).

This sequence belongs to the universal ribosomal protein uL22 family. Part of the 50S ribosomal subunit.

Functionally, this protein binds specifically to 23S rRNA; its binding is stimulated by other ribosomal proteins, e.g. L4, L17, and L20. It is important during the early stages of 50S assembly. It makes multiple contacts with different domains of the 23S rRNA in the assembled 50S subunit and ribosome. The globular domain of the protein is located near the polypeptide exit tunnel on the outside of the subunit, while an extended beta-hairpin is found that lines the wall of the exit tunnel in the center of the 70S ribosome. The sequence is that of Large ribosomal subunit protein uL22 from Synechococcus sp. (strain WH7803).